The primary structure comprises 611 residues: Methionine--tRNA ligase (611 aa).

Residues 12–22 carry the 'HIGH' region motif; it reads PYANGPRHIGH. Zn(2+) is bound by residues Cys-144, Cys-147, Cys-157, and Cys-160. Residues 348–352 carry the 'KMSKS' region motif; that stretch reads KFSSS. Ser-351 contacts ATP.

It belongs to the class-I aminoacyl-tRNA synthetase family. MetG type 1 subfamily. Monomer. Zn(2+) is required as a cofactor.

The protein resides in the cytoplasm. It carries out the reaction tRNA(Met) + L-methionine + ATP = L-methionyl-tRNA(Met) + AMP + diphosphate. Functionally, is required not only for elongation of protein synthesis but also for the initiation of all mRNA translation through initiator tRNA(fMet) aminoacylation. The chain is Methionine--tRNA ligase from Corynebacterium urealyticum (strain ATCC 43042 / DSM 7109).